Consider the following 88-residue polypeptide: MSSFDQTMQFHFSEEPAETNVREVLLTVYGALQEKGYNPINQIVGYLLSGDPAYIPRHKDARALIRKIERDELIEELVKFYLQGQRKD.

It belongs to the UPF0297 family.

This Geobacillus kaustophilus (strain HTA426) protein is UPF0297 protein GK2555.